Consider the following 209-residue polypeptide: Probable nicotinate-nucleotide adenylyltransferase (209 aa).

It belongs to the NadD family.

The catalysed reaction is nicotinate beta-D-ribonucleotide + ATP + H(+) = deamido-NAD(+) + diphosphate. Its pathway is cofactor biosynthesis; NAD(+) biosynthesis; deamido-NAD(+) from nicotinate D-ribonucleotide: step 1/1. In terms of biological role, catalyzes the reversible adenylation of nicotinate mononucleotide (NaMN) to nicotinic acid adenine dinucleotide (NaAD). In Streptococcus pneumoniae serotype 4 (strain ATCC BAA-334 / TIGR4), this protein is Probable nicotinate-nucleotide adenylyltransferase.